Consider the following 156-residue polypeptide: Small ribosomal subunit protein uS7 (156 aa).

The protein belongs to the universal ribosomal protein uS7 family. Part of the 30S ribosomal subunit. Contacts proteins S9 and S11.

Its function is as follows. One of the primary rRNA binding proteins, it binds directly to 16S rRNA where it nucleates assembly of the head domain of the 30S subunit. Is located at the subunit interface close to the decoding center, probably blocks exit of the E-site tRNA. This Lactobacillus delbrueckii subsp. bulgaricus (strain ATCC 11842 / DSM 20081 / BCRC 10696 / JCM 1002 / NBRC 13953 / NCIMB 11778 / NCTC 12712 / WDCM 00102 / Lb 14) protein is Small ribosomal subunit protein uS7.